Reading from the N-terminus, the 564-residue chain is NAD-dependent malic enzyme (564 aa).

Tyr102 acts as the Proton donor in catalysis. Arg155 is an NAD(+) binding site. The active-site Proton acceptor is the Lys173. Residues Glu244, Asp245, and Asp268 each contribute to the a divalent metal cation site. 2 residues coordinate NAD(+): Asp268 and Asn417.

Belongs to the malic enzymes family. Homotetramer. Requires Mg(2+) as cofactor. The cofactor is Mn(2+).

It carries out the reaction (S)-malate + NAD(+) = pyruvate + CO2 + NADH. The catalysed reaction is oxaloacetate + H(+) = pyruvate + CO2. This Pseudomonas aeruginosa (strain UCBPP-PA14) protein is NAD-dependent malic enzyme.